The chain runs to 619 residues: Hypermethylated in cancer 2 protein (619 aa).

In terms of domain architecture, BTB spans 46-109; that stretch reads CDVIIMVENS…IYTGKLLPSD (64 aa). 3 positions are modified to phosphoserine: S166, S169, and S197. 2 disordered regions span residues 180–293 and 307–426; these read DVRK…VGNS and MDVE…GHTG. Over residues 214-228 the composition is skewed to gly residues; it reads LGLGGPAGGEMGLGG. The tract at residues 247 to 249 is binding to CtBP; that stretch reads DLS. The span at 281 to 293 shows a compositional bias: polar residues; that stretch reads APTSTSALPVGNS. A compositionally biased stretch (basic and acidic residues) spans 337–357; the sequence is KKDWNKKEPVAGSPFDRRETG. Phosphoserine occurs at positions 349 and 416. 5 consecutive C2H2-type zinc fingers follow at residues 446–468, 509–531, 537–559, 565–587, and 593–615; these read YVCI…VETH, FKCS…EKTH, FPCN…MRSH, FACD…MRVH, and YECQ…LRMH.

It belongs to the krueppel C2H2-type zinc-finger protein family. Hic subfamily. Self-associates. Interacts with HIC1.

Its subcellular location is the nucleus. Its function is as follows. Transcriptional repressor. In Mus musculus (Mouse), this protein is Hypermethylated in cancer 2 protein (Hic2).